Here is a 498-residue protein sequence, read N- to C-terminus: MKINPTTSGSGVSTLEKKNMGRIVQIIGPVLDVAFPAGKMPNIYNALVVKGRDTVGQPINVTCEVQQLLGNNRVRAVAMSSTDGLTRGMEVIDTGAPLSVPVGGATLGRIFNVLGEPVDNLGAVDTRTTSPIHRSAPAFIQLDTKLSIFETGIKVVDLLAPYRRGGKIGLFGGAGVGKTVLIMELINNIAKAHGGVSVFGGVGERTREGNDLYMEMKESGVINKENIAESKVALVYGQMNEPPGARMRVGLTALTMAEYFRDVNEQDVLLFIDNIFRFVQAGSEVSALLGRMPSAVGYQPTLSTEMGSLQERITSTKEGSITSIQAVYVPADDLTDPAPATTFAHLDATTVLSRGLAAKGIYPAVDPLDSTSTMLQPRIVGEEHYETAQRVKQTLQRYKELQDIIAILGLDELSEEDRLTVARARKIERFLSQPFFVAEVFTGSPGKYVGLAETIRGFQLILSGELDSLPEQAFYLVGNIDEATAKAMNLEMENNLKK.

172–179 lines the ATP pocket; the sequence is GGAGVGKT.

The protein belongs to the ATPase alpha/beta chains family. In terms of assembly, F-type ATPases have 2 components, CF(1) - the catalytic core - and CF(0) - the membrane proton channel. CF(1) has five subunits: alpha(3), beta(3), gamma(1), delta(1), epsilon(1). CF(0) has four main subunits: a(1), b(1), b'(1) and c(9-12).

It localises to the plastid. The protein resides in the chloroplast thylakoid membrane. It carries out the reaction ATP + H2O + 4 H(+)(in) = ADP + phosphate + 5 H(+)(out). Produces ATP from ADP in the presence of a proton gradient across the membrane. The catalytic sites are hosted primarily by the beta subunits. This is ATP synthase subunit beta, chloroplastic from Coffea arabica (Arabian coffee).